A 182-amino-acid polypeptide reads, in one-letter code: Protein SrpB (182 aa).

Transmembrane regions (helical) follow at residues 11-31 (WLGL…IGLN), 43-63 (TFTL…QAEG), 73-93 (LSRT…GLIL), and 116-136 (IWIT…LGLI).

This sequence belongs to the MgtC/SapB family.

It is found in the cell membrane. This chain is Protein SrpB (srpB), found in Synechococcus elongatus (strain ATCC 33912 / PCC 7942 / FACHB-805) (Anacystis nidulans R2).